Consider the following 137-residue polypeptide: Large ribosomal subunit protein uL16 (137 aa).

This sequence belongs to the universal ribosomal protein uL16 family. Part of the 50S ribosomal subunit.

Binds 23S rRNA and is also seen to make contacts with the A and possibly P site tRNAs. The protein is Large ribosomal subunit protein uL16 of Wolbachia pipientis wMel.